Consider the following 468-residue polypeptide: UDP-N-acetylmuramate--L-alanine ligase (468 aa).

114 to 120 (GTHGKTT) contributes to the ATP binding site.

It belongs to the MurCDEF family.

It localises to the cytoplasm. It catalyses the reaction UDP-N-acetyl-alpha-D-muramate + L-alanine + ATP = UDP-N-acetyl-alpha-D-muramoyl-L-alanine + ADP + phosphate + H(+). It functions in the pathway cell wall biogenesis; peptidoglycan biosynthesis. Its function is as follows. Cell wall formation. The protein is UDP-N-acetylmuramate--L-alanine ligase of Rhodopseudomonas palustris (strain HaA2).